We begin with the raw amino-acid sequence, 575 residues long: Carboxylesterase 5A (575 aa).

The first 20 residues, 1–20 (MSGNWVHPGQILIWAIWVLA), serve as a signal peptide directing secretion. The cysteines at positions 94 and 121 are disulfide-linked. The active-site Acyl-ester intermediate is the S226. Residue N281 is glycosylated (N-linked (GlcNAc...) asparagine). The active-site Charge relay system is E345. N363 carries N-linked (GlcNAc...) asparagine glycosylation. The Charge relay system role is filled by H454. N-linked (GlcNAc...) asparagine glycans are attached at residues N513 and N524.

Belongs to the type-B carboxylesterase/lipase family. N-glycosylated.

It localises to the secreted. The enzyme catalyses a carboxylic ester + H2O = an alcohol + a carboxylate + H(+). In terms of biological role, involved in the detoxification of xenobiotics and in the activation of ester and amide prodrugs. The chain is Carboxylesterase 5A (CES5A) from Homo sapiens (Human).